The sequence spans 378 residues: Nitronate monooxygenase (378 aa).

Positions 1–15 (MHFPGHSSKKEESAQ) are excised as a propeptide. Residue 37 to 39 (PMY) participates in FMN binding. The Proton acceptor role is filled by His-196. Residue His-196 coordinates substrate. Residues 229–231 (AGG) and 252–253 (GT) each bind FMN.

It belongs to the nitronate monooxygenase family. NMO class II subfamily. Homodimer. It depends on FMN as a cofactor.

It catalyses the reaction ethylnitronate + O2 = chemical entity + acetaldehyde + nitrite + H(+). Functionally, catalyzes the oxidation of alkyl nitronates to produce the corresponding carbonyl compounds and nitrites. Anionic forms of nitroalkanes are much better substrates than are neutral forms. This Neurospora crassa (strain ATCC 24698 / 74-OR23-1A / CBS 708.71 / DSM 1257 / FGSC 987) protein is Nitronate monooxygenase (ncd-2).